Consider the following 121-residue polypeptide: Snaclec coagulation factor IX-binding protein subunit A (121 aa).

Residues 1-120 (YEGHCYQTFK…CGERNPFVCE (120 aa)) form the C-type lectin domain. 2 disulfide bridges follow: Cys-22–Cys-119 and Cys-94–Cys-111. 3 residues coordinate Ca(2+): Ser-33, Glu-35, and Glu-39. A Ca(2+)-binding site is contributed by Glu-120.

It belongs to the snaclec family. In terms of assembly, heterodimer of subunits A and B; disulfide-linked. In terms of tissue distribution, expressed by the venom gland.

The protein resides in the secreted. Anticoagulant protein which binds to the gamma-carboxyglutamic acid-domain regions of factor IX (F9) (but not factor X) in the presence of calcium with a 1 to 1 stoichiometry. The polypeptide is Snaclec coagulation factor IX-binding protein subunit A (Gloydius halys (Chinese water mocassin)).